A 994-amino-acid polypeptide reads, in one-letter code: MDIELPYLAEYARTGRATCKGCKSTISKDTLRIAVMVQSAFHDAKVPNWFHKTCFFKNQRPSSVGDIQNIGNLRFADQKELTDLVENIQEVISAQLGKKRSKAFNLALKDFGIEYAKSSRSTCRGCEQKINKDLVRLRKTVYDTEVGMKYGGQPLWHHLECFAQLRSELGWFASGEDMPGFQSLADDDQAKVKNAIPPIKSEELPDTKRAKMELSDTNEEGEKKQRLKDQNDAYFRFRDDIKNKMKKKDIDILLKFNNQQPVTGDTEKLFDQTADLLTFGAIESCSECNSCQFIVNKSGYICNGNHSEWTKCNKLLKEPTRSACIVPKELKALYNFLNTVKEIPSTRIFNNFPPNKSTFSRSLLKTNKNNDVLVRPTIPRISPPLYNLKFSIIGLKNQHKELRKRIENLGGKFEVKISENTIAIISTELEIQKKSTRMKFAEELGIHIVPIEFLDFVEADTEGAIKYINSTCICSWGTDPKSRIPKETTKSLNSNSIYTKSMPVSRTFKVKDGLAVDPDSGLEDIAHVYVDSNNKYSVVLGLTDIQRNKNSYYKVQLLKADKKEKYWIFRSWGRIGTNIGNSKLEEFDTSESAKRNFKEIYADKTGNEYEQRDNFVKRTGRMYPIEIQYDDDQKLVKHESHFFTSKLEISVQNLIKLIFDIDSMNKTLMEFHIDMDKMPLGKLSAHQIQSAYRVVKEIYNVLECGSNTAKLIDATNRFYTLIPHNFGVQLPTLIETHQQIEDLRQMLDSLAEIEVAYSIIKSEDVSDACNPLDNHYAQIKTQLVALDKNSEEFSILSQYVKNTHASTHKSYDLKIVDVFKVSRQGEARRFKPFKKLHNRKLLWHGSRLTNFVGILSHGLRIAPPEAPPTGYMFGKGIYFADMVSKSANYCCTSQQNSTGLMLLSEVALGDMMECTSAKYINKLSNNKHSCFGRGRTMPDPTKSYIRSDGVEIPYGETITDEHLKSSLLYNEYIVYDVAQVNIQYLFRMEFKYSY.

2 consecutive PARP-type zinc fingers follow at residues 7 to 89 and 111 to 200; these read YLAE…ENIQ and FGIE…PPIK. Zn(2+) contacts are provided by C19, C22, H51, C54, C123, C126, H158, and C161. The disordered stretch occupies residues 199–225; sequence IKSEELPDTKRAKMELSDTNEEGEKKQ. A compositionally biased stretch (basic and acidic residues) spans 200 to 225; that stretch reads KSEELPDTKRAKMELSDTNEEGEKKQ. 2 short sequence motifs (nuclear localization signal) span residues 208–210 and 223–228; these read KRA and KKQRLK. The PADR1 zinc-binding domain maps to 214–354; it reads LSDTNEEGEK…STRIFNNFPP (141 aa). The tract at residues 280–323 is zinc ribbon; it reads GAIESCSECNSCQFIVNKSGYICNGNHSEWTKCNKLLKEPTRSA. 4 residues coordinate Zn(2+): C285, C288, C302, and C312. Positions 368 to 507 are automodification domain; the sequence is KNNDVLVRPT…YTKSMPVSRT (140 aa). Residues 380-471 form the BRCT domain; sequence RISPPLYNLK…EGAIKYINST (92 aa). The region spanning 525 to 622 is the WGR domain; the sequence is IAHVYVDSNN…DNFVKRTGRM (98 aa). The PARP alpha-helical domain occupies 644-761; sequence TSKLEISVQN…EIEVAYSIIK (118 aa). Residues 770-994 enclose the PARP catalytic domain; it reads NPLDNHYAQI…LFRMEFKYSY (225 aa). E971 (for poly [ADP-ribose] polymerase activity) is an active-site residue.

Belongs to the ARTD/PARP family. Expressed in adult female oocytes, anal plates of stage 12 embryos and in cells around the central nervous system in later embryos.

The protein localises to the nucleus. It is found in the chromosome. Its subcellular location is the nucleolus. It carries out the reaction NAD(+) + (ADP-D-ribosyl)n-acceptor = nicotinamide + (ADP-D-ribosyl)n+1-acceptor + H(+).. The catalysed reaction is L-seryl-[protein] + NAD(+) = O-(ADP-D-ribosyl)-L-seryl-[protein] + nicotinamide + H(+). It catalyses the reaction L-aspartyl-[protein] + NAD(+) = 4-O-(ADP-D-ribosyl)-L-aspartyl-[protein] + nicotinamide. The enzyme catalyses L-glutamyl-[protein] + NAD(+) = 5-O-(ADP-D-ribosyl)-L-glutamyl-[protein] + nicotinamide. Poly-ADP-ribosyltransferase that mediates poly-ADP-ribosylation of proteins and plays a key role in DNA repair. Mediates glutamate, aspartate or serine ADP-ribosylation of proteins: the ADP-D-ribosyl group of NAD(+) is transferred to the acceptor carboxyl group of target residues and further ADP-ribosyl groups are transferred to the 2'-position of the terminal adenosine moiety, building up a polymer with an average chain length of 20-30 units. Mainly mediates glutamate and aspartate ADP-ribosylation of target proteins in absence of CG1218/HPF1. Following interaction with CG1218/HPF1, catalyzes serine ADP-ribosylation of target proteins; CG1218/HPF1 conferring serine specificity by completing the Parp active site. In terms of biological role, plays a fundamental role in organizing chromatin on a global scale. Autoregulates Parp transcription by influencing the chromatin structure of its heterochromatic environment. The protein is Poly [ADP-ribose] polymerase (Parp) of Drosophila melanogaster (Fruit fly).